The following is a 622-amino-acid chain: Probable potassium transport system protein Kup (622 aa).

The next 12 helical transmembrane spans lie at 9 to 29 (LPAV…TSPL), 52 to 72 (FLSL…LAFV), 101 to 121 (VLLV…VITP), 137 to 157 (PALT…LFVI), 169 to 189 (FGPV…ISIF), 213 to 233 (VAFF…ALYA), 247 to 267 (WFTV…ALIL), 287 to 309 (FPMV…SGVF), 337 to 357 (IYIP…VVTF), 363 to 383 (LAAA…ILAC), 396 to 416 (VVKI…LANV), and 419 to 439 (FFAG…VMAT).

This sequence belongs to the HAK/KUP transporter (TC 2.A.72) family.

The protein localises to the cell inner membrane. The enzyme catalyses K(+)(in) + H(+)(in) = K(+)(out) + H(+)(out). Transport of potassium into the cell. Likely operates as a K(+):H(+) symporter. This chain is Probable potassium transport system protein Kup, found in Tolumonas auensis (strain DSM 9187 / NBRC 110442 / TA 4).